A 66-amino-acid chain; its full sequence is Large ribosomal subunit protein uL29 (66 aa).

Belongs to the universal ribosomal protein uL29 family.

The protein is Large ribosomal subunit protein uL29 of Borreliella burgdorferi (strain ZS7) (Borrelia burgdorferi).